The chain runs to 667 residues: MAAETLLSSLLGLLLLGLLLPASLTGGVGSLNLEELSEMRYGIEILPLPVMGGQSQSSDVVIVSSKYKQRYECRLPAGAIHFQREREEETPAYQGPGIPELLSPMRDAPCLLKTKDWWTYEFCYGRHIQQYHMEDSEIKGEVLYLGYYQSAFDWDDETAKASKQHRLKRYHSQTYGNGSKCDLNGRPREAEVRFLCDEGAGISGDYIDRVDEPLSCSYVLTIRTPRLCPHPLLRPPPSAAPQAILCHPSLQPEEYMAYVQRQADSKQYGDKIIEELQDLGPQVWSETKSGVAPQKMAGASPTKDDSKDSDFWKMLNEPEDQAPGGEEVPAEEQDPSPEAADSASGAPNDFQNNVQVKVIRSPADLIRFIEELKGGTKKGKPNIGQEQPVDDAAEVPQREPEKERGDPERQREMEEEEDEDEDEDEDEDERQLLGEFEKELEGILLPSDRDRLRSEVKAGMERELENIIQETEKELDPDGLKKESERDRAMLALTSTLNKLIKRLEEKQSPELVKKHKKKRVVPKKPPPSPQPTEEDPEHRVRVRVTKLRLGGPNQDLTVLEMKRENPQLKQIEGLVKELLEREGLTAAGKIEIKIVRPWAEGTEEGARWLTDEDTRNLKEIFFNILVPGAEEAQKERQRQKELESNYRRVWGSPGGEGTGDLDEFDF.

The N-terminal stretch at 1-25 is a signal peptide; the sequence is MAAETLLSSLLGLLLLGLLLPASLT. Residues 108–230 enclose the MRH domain; that stretch reads APCLLKTKDW…TIRTPRLCPH (123 aa). Cys-110 and Cys-123 form a disulfide bridge. Trp-117, Trp-118, and Gln-130 together coordinate a mannooligosaccharide derivative. Residue Asn-177 is glycosylated (N-linked (GlcNAc...) asparagine). 2 disulfides stabilise this stretch: Cys-181–Cys-216 and Cys-196–Cys-228. Asp-182, Arg-188, Glu-212, and Tyr-218 together coordinate a mannooligosaccharide derivative. Disordered regions lie at residues 284 to 355, 372 to 452, 464 to 483, 504 to 540, and 633 to 667; these read WSET…NNVQ, LKGG…RDRL, LENI…LKKE, LEEK…PEHR, and AQKE…EFDF. Composition is skewed to basic and acidic residues over residues 302-311 and 396-412; these read TKDDSKDSDF and PQRE…RQRE. The segment covering 413–429 has biased composition (acidic residues); that stretch reads MEEEEDEDEDEDEDEDE. Basic and acidic residues predominate over residues 430 to 452; the sequence is RQLLGEFEKELEGILLPSDRDRL. The segment covering 504–513 has biased composition (basic and acidic residues); that stretch reads LEEKQSPELV. The span at 514–523 shows a compositional bias: basic residues; it reads KKHKKKRVVP. Basic and acidic residues predominate over residues 633 to 647; it reads AQKERQRQKELESNY.

Belongs to the OS-9 family. In terms of assembly, component of the HRD1 complex, which comprises at least SYNV1/HRD1, DERL1/2, FAM8A1, HERPUD1/HERP, OS9, SEL1L and UBE2J1. FAM8A1 is stabilized by interaction with SYNV1, which prevents its proteasomal degradation. OS9 and UBE2J1 recruitment to the complex may be mediated by SEL1L. Through this complex, may interact with ERLEC1 and HSPA5. Interacts (via C-terminus) with CPNE6 (via second C2 domain); this interaction occurs in a calcium-dependent manner in vitro. Interacts with CREB3. Intramolecular disulfide bonds. In terms of processing, isoform 1 and isoform 2 are N-glycosylated. In terms of tissue distribution, ubiquitously expressed. Found as well in all tumor cell lines analyzed, amplified in sarcomas. Highly expressed in osteosarcoma SJSA-1 and rhabdomyosarcoma Rh30 cell lines. Isoform 2 is the major isoform detected in all cell types examined.

Its subcellular location is the endoplasmic reticulum lumen. Lectin component of the HRD1 complex, which functions in endoplasmic reticulum (ER) quality control and ER-associated degradation (ERAD). Specifically recognizes and binds improperly folded glycoproteins as well as hyperglycosylated proteins, retain them in the ER, and transfers them to the ubiquitination machinery and promote their degradation. Possible targets include TRPV4 as well as hyperglycosylated HSP90B1. The protein is Protein OS-9 (OS9) of Homo sapiens (Human).